The sequence spans 140 residues: Large ribosomal subunit protein uL11 (140 aa).

It belongs to the universal ribosomal protein uL11 family. As to quaternary structure, part of the ribosomal stalk of the 50S ribosomal subunit. Interacts with L10 and the large rRNA to form the base of the stalk. L10 forms an elongated spine to which L12 dimers bind in a sequential fashion forming a multimeric L10(L12)X complex. One or more lysine residues are methylated.

Forms part of the ribosomal stalk which helps the ribosome interact with GTP-bound translation factors. This is Large ribosomal subunit protein uL11 from Geobacter metallireducens (strain ATCC 53774 / DSM 7210 / GS-15).